Consider the following 122-residue polypeptide: Large ribosomal subunit protein uL14 (122 aa).

It belongs to the universal ribosomal protein uL14 family. Part of the 50S ribosomal subunit. Forms a cluster with proteins L3 and L19. In the 70S ribosome, L14 and L19 interact and together make contacts with the 16S rRNA in bridges B5 and B8.

Binds to 23S rRNA. Forms part of two intersubunit bridges in the 70S ribosome. The protein is Large ribosomal subunit protein uL14 of Nocardia farcinica (strain IFM 10152).